We begin with the raw amino-acid sequence, 162 residues long: MGANRLVAVHIDEETLGASGPDAEHERRVAIFDLIEENTFGVIGEDRGPYVLALSQHERRLVFAIRTEPGEEVHTFILSLSPFRGVIRDYFTICDSYYEAIRMSTPHQIEAIDMARRGIHNEGSELLKERLEGKIDIDFHTARRLFTLICALHAGQGRAPGA.

It belongs to the UPF0262 family.

In Hyphomonas neptunium (strain ATCC 15444), this protein is UPF0262 protein HNE_1347.